The following is a 235-amino-acid chain: Large ribosomal subunit protein uL1 (235 aa).

This sequence belongs to the universal ribosomal protein uL1 family. In terms of assembly, part of the 50S ribosomal subunit.

Binds directly to 23S rRNA. The L1 stalk is quite mobile in the ribosome, and is involved in E site tRNA release. In terms of biological role, protein L1 is also a translational repressor protein, it controls the translation of the L11 operon by binding to its mRNA. The sequence is that of Large ribosomal subunit protein uL1 from Nitratidesulfovibrio vulgaris (strain ATCC 29579 / DSM 644 / CCUG 34227 / NCIMB 8303 / VKM B-1760 / Hildenborough) (Desulfovibrio vulgaris).